Here is a 272-residue protein sequence, read N- to C-terminus: MTDDSLFLIDVDKILRTKAPKQYKYIPKFVVSYLKKIVHQDEINVFLNESKDKLGVDFLEACMEFLDAKVEVKGIENLPKEGLYTFVSNHPLGGQDGVALGYVLGRHYDGKVKYLVNDLLMNLRGLAPLCVPINKTGKQAKDFPKMVEAGFQSDDQMIMFPAGLCSRRQNGVIRDLEWKKTFIIKSIQAKRDVVPVHFGGRNSDFFYNLANVCKALGIKFNIAMLYLADEMFKNRHKTFTVTFGKPIPWQTFDKSKTPAQWAEYVKDIVYKL.

This sequence belongs to the O-acyltransferase GlsA family.

The catalysed reaction is a lyso-glycine lipid + a fatty acyl-[ACP] = a glycine lipid + holo-[ACP]. The enzyme catalyses N-[(3R)-3-hydroxyhexadecanoyl]-glycine + hexadecanoyl-[ACP] = N-[(3R)-3-(hexadecanoyloxy)hexadecanoyl]-glycine + holo-[ACP]. Its pathway is lipid metabolism. Is involved in the production of glycine lipids (GL), which are phosphorus-free membrane lipids important for fitness during growth of the human gut bacterium B.thetaiotaomicron in vivo and in vitro. Catalyzes the second step of GL biosynthesis, i.e. the O-acylation of the hydroxyl group of lyso-glycine lipids, resulting in the production of the mature diacylated glycine lipids. In Bacteroides thetaiotaomicron (strain ATCC 29148 / DSM 2079 / JCM 5827 / CCUG 10774 / NCTC 10582 / VPI-5482 / E50), this protein is Lyso-glycine lipid O-acyltransferase.